The sequence spans 375 residues: MGSSILTNRSAMTALQTLRNIDNNLDKSKDRISTGLRIGSASDNTAYWSISSMMKHDSNTMSAVVDAINLGREQVNVAATAVNLTKESLDDIQKSMVSAREKSDDDIMKIQDSIKGNMQNISNAIQSAAFGGKNILSNGGEKVGIAAGYRREGSAVYVDMIEVGGAELNFGVMGPDGTIDMTQGILKGVFGKSDKDIDAGIKTFTEAADKQKGLEDALAKAEAAVAANPNDEAAKTALEEAKKAVEDNKEDWTKAQSDFKVVADSMTLNDFVQMQGVGGLPSVAQSIILNSVQKTVRHAVDVTLTAGSKIGSAVNQVDSQLNFVKRLLDNIEAGIGALVDADMNAESAKLSALQVQQQLGIPRLFLLQIRAARIF.

This sequence belongs to the bacterial flagellin family.

The protein localises to the secreted. It is found in the bacterial flagellum. In terms of biological role, flagellin is the subunit protein which polymerizes to form the filaments of bacterial flagella. Flagella are an important component in the invasiveness of B.bacilliformis. This chain is Flagellin, found in Bartonella bacilliformis.